A 336-amino-acid chain; its full sequence is tRNA N6-adenosine threonylcarbamoyltransferase (336 aa).

Fe cation contacts are provided by His-111 and His-115. Substrate is bound by residues 134–138, Asp-167, Gly-180, Asp-184, and Asn-272; that span reads VVSGG. Asp-300 contributes to the Fe cation binding site.

This sequence belongs to the KAE1 / TsaD family. Requires Fe(2+) as cofactor.

The protein localises to the cytoplasm. It carries out the reaction L-threonylcarbamoyladenylate + adenosine(37) in tRNA = N(6)-L-threonylcarbamoyladenosine(37) in tRNA + AMP + H(+). In terms of biological role, required for the formation of a threonylcarbamoyl group on adenosine at position 37 (t(6)A37) in tRNAs that read codons beginning with adenine. Is involved in the transfer of the threonylcarbamoyl moiety of threonylcarbamoyl-AMP (TC-AMP) to the N6 group of A37, together with TsaE and TsaB. TsaD likely plays a direct catalytic role in this reaction. The protein is tRNA N6-adenosine threonylcarbamoyltransferase of Caldicellulosiruptor bescii (strain ATCC BAA-1888 / DSM 6725 / KCTC 15123 / Z-1320) (Anaerocellum thermophilum).